The primary structure comprises 351 residues: Deoxyuridylate hydroxymethyltransferase (351 aa).

The protein belongs to the thymidylate synthase family.

It catalyses the reaction dUMP + (6R)-5,10-methylene-5,6,7,8-tetrahydrofolate + H2O = 5-hydroxymethyl-dUMP + (6S)-5,6,7,8-tetrahydrofolate. Functionally, catalyzes formation of 5-hydroxymethyldeoxyuridylate (5HMdUMP) as a step in the pathway that replaces dTMP by thymidine hypermodifications in the viral genome. As a final result of the pathway of hypermodification, 5-aminoethyl-2'-deoxyuridine (5-NedU) substitutes for about 30% of thymidines in the viral DNA. These modifications probably prevent degradation of viral genome by the host restriction-modification antiviral defense system. The protein is Deoxyuridylate hydroxymethyltransferase of Pseudomonas aeruginosa.